A 168-amino-acid chain; its full sequence is Sensor histidine kinase component HK1 (168 aa).

The region spanning 1 to 141 (MPITPLLHES…ELRITLPTPR (141 aa)) is the Histidine kinase; second part domain. Positions 137–168 (LPTPRPPFHEELPRITSSDTKDPNREHDTSDQ) are disordered. The span at 143-168 (PFHEELPRITSSDTKDPNREHDTSDQ) shows a compositional bias: basic and acidic residues.

As to quaternary structure, interacts with HK2.

It carries out the reaction ATP + protein L-histidine = ADP + protein N-phospho-L-histidine.. Functionally, member of the three-protein two-component system HK1/HK2/TcrA. Kinase that binds ATP and catalyzes the transfer of a phosphoryl group from ATP to HK2. In Mycobacterium tuberculosis (strain ATCC 25618 / H37Rv), this protein is Sensor histidine kinase component HK1.